We begin with the raw amino-acid sequence, 309 residues long: Haloalkane dehalogenase (309 aa).

The region spanning 37-148 is the AB hydrolase-1 domain; it reads PTVLFLHGNP…FERWEDFHQR (112 aa). Asp-110 functions as the Nucleophile in the catalytic mechanism. Glu-134 serves as the catalytic Proton donor. Catalysis depends on His-278, which acts as the Proton acceptor.

This sequence belongs to the haloalkane dehalogenase family. Type 2 subfamily. In terms of assembly, monomer.

It catalyses the reaction 1-haloalkane + H2O = a halide anion + a primary alcohol + H(+). In terms of biological role, catalyzes hydrolytic cleavage of carbon-halogen bonds in halogenated aliphatic compounds, leading to the formation of the corresponding primary alcohols, halide ions and protons. The polypeptide is Haloalkane dehalogenase (Mesorhizobium japonicum (strain LMG 29417 / CECT 9101 / MAFF 303099) (Mesorhizobium loti (strain MAFF 303099))).